Reading from the N-terminus, the 168-residue chain is MPRSQKNDNFIDKTFTIVADILLRIIPTTQREKEAFTYYRDGMSAQSEGEYAEALQNYYEAMRLEIDPYDRSYILYNIGLIHTSNGEHAKALEYYFQALERNPSLPQAFNNMAVICHYRGEQAIQQGDSETSEAWFNQAADYWKQAIALAPSNYIEAQNWLKITDRLK.

TPR repeat units lie at residues 35–68 (AFTY…EIDP), 72–105 (SYIL…NPSL), and 120–153 (GEQA…APSN).

The protein belongs to the Ycf3 family.

It localises to the plastid. The protein localises to the chloroplast thylakoid membrane. In terms of biological role, essential for the assembly of the photosystem I (PSI) complex. May act as a chaperone-like factor to guide the assembly of the PSI subunits. The sequence is that of Photosystem I assembly protein Ycf3 from Physcomitrium patens (Spreading-leaved earth moss).